Consider the following 542-residue polypeptide: GMP synthase [glutamine-hydrolyzing] (542 aa).

Residues 28–218 form the Glutamine amidotransferase type-1 domain; that stretch reads MLVILDFGSQ…VYHICQCEPT (191 aa). Cys-105 functions as the Nucleophile in the catalytic mechanism. Active-site residues include His-192 and Glu-194. The 199-residue stretch at 219-417 folds into the GMPS ATP-PPase domain; it reads WTTEAFVEES…IGLPEEIVRR (199 aa). 246 to 252 is a binding site for ATP; it reads SGGVDSS.

In terms of assembly, homodimer.

The enzyme catalyses XMP + L-glutamine + ATP + H2O = GMP + L-glutamate + AMP + diphosphate + 2 H(+). Its pathway is purine metabolism; GMP biosynthesis; GMP from XMP (L-Gln route): step 1/1. In terms of biological role, catalyzes the synthesis of GMP from XMP. The sequence is that of GMP synthase [glutamine-hydrolyzing] from Rippkaea orientalis (strain PCC 8801 / RF-1) (Cyanothece sp. (strain PCC 8801)).